The following is a 257-amino-acid chain: Glutamate racemase (257 aa).

Substrate is bound by residues Asp-12–Ser-13 and Tyr-44–Gly-45. Cys-75 (proton donor/acceptor) is an active-site residue. Substrate is bound at residue Asn-76 to Thr-77. The active-site Proton donor/acceptor is Cys-176. Thr-177 to His-178 serves as a coordination point for substrate.

The protein belongs to the aspartate/glutamate racemases family.

It catalyses the reaction L-glutamate = D-glutamate. It participates in cell wall biogenesis; peptidoglycan biosynthesis. Functionally, provides the (R)-glutamate required for cell wall biosynthesis. The protein is Glutamate racemase of Thermus thermophilus (strain ATCC 27634 / DSM 579 / HB8).